The sequence spans 354 residues: Ion-translocating oxidoreductase complex subunit D (354 aa).

4 helical membrane passes run 19–39 (IMLL…YYFG), 40–60 (FGVL…EFLV), 77–99 (AAVT…LSFF), and 119–139 (IFNP…ILMT). Threonine 187 bears the FMN phosphoryl threonine mark. Transmembrane regions (helical) follow at residues 221-241 (WISI…FNVI), 245-265 (IPVS…YFFK), 268-288 (MYYP…FFIA), 295-315 (SITK…IWLI), and 319-339 (GNYP…VPLI).

It belongs to the NqrB/RnfD family. The complex is composed of six subunits: RnfA, RnfB, RnfC, RnfD, RnfE and RnfG. It depends on FMN as a cofactor.

The protein localises to the cell inner membrane. Its function is as follows. Part of a membrane-bound complex that couples electron transfer with translocation of ions across the membrane. This Buchnera aphidicola subsp. Baizongia pistaciae (strain Bp) protein is Ion-translocating oxidoreductase complex subunit D.